A 369-amino-acid polypeptide reads, in one-letter code: 3-dehydroquinate synthase (369 aa).

Residues 70–75, 104–108, 128–129, lysine 141, lysine 150, and 168–171 each bind NAD(+); these read DAEDGK, GAATD, TT, and TLET. Zn(2+) is bound by residues glutamate 183, histidine 246, and histidine 262.

It belongs to the sugar phosphate cyclases superfamily. Dehydroquinate synthase family. Co(2+) serves as cofactor. Requires Zn(2+) as cofactor. NAD(+) is required as a cofactor.

The protein localises to the cytoplasm. The enzyme catalyses 7-phospho-2-dehydro-3-deoxy-D-arabino-heptonate = 3-dehydroquinate + phosphate. Its pathway is metabolic intermediate biosynthesis; chorismate biosynthesis; chorismate from D-erythrose 4-phosphate and phosphoenolpyruvate: step 2/7. Functionally, catalyzes the conversion of 3-deoxy-D-arabino-heptulosonate 7-phosphate (DAHP) to dehydroquinate (DHQ). The protein is 3-dehydroquinate synthase of Rhodococcus erythropolis (strain PR4 / NBRC 100887).